We begin with the raw amino-acid sequence, 290 residues long: L-proline cis-3-hydroxylase 1 (290 aa).

3 residues coordinate Fe cation: His-107, Asp-109, and His-158. Arg-168 contacts 2-oxoglutarate.

The protein belongs to the L-proline cis-4-/cis-3-hydroxylase family. As to quaternary structure, homodimer. It depends on Fe(2+) as a cofactor.

It catalyses the reaction L-proline + 2-oxoglutarate + O2 = cis-3-hydroxy-L-proline + succinate + CO2. With respect to regulation, inhibited by metal ions such as Co(2+), Zn(2+), Ni(2+) or Cu(2+). Is also inhibited by EDTA in vitro. Unlike the procollagen-proline cis-3- and trans-4-hydroxylases from mammals, does not necessarily require L-ascorbate for activity although it does increase the activity of the enzyme. Dioxygenase that catalyzes the 2-oxoglutarate-dependent selective hydroxylation of free L-proline to cis-3-hydroxy-L-proline (cis-3-Hyp). D-proline, trans-4-hydroxy-L-proline, cis-4-hydroxy-L-proline, cis-4-hydroxy-D-proline, and 3,4-dehydro-DL-proline are not substrates. The polypeptide is L-proline cis-3-hydroxylase 1 (Streptomyces sp).